Reading from the N-terminus, the 213-residue chain is Phosphatidylserine decarboxylase proenzyme (213 aa).

Residue Ser183 is the Schiff-base intermediate with substrate; via pyruvic acid of the active site. Residue Ser183 is modified to Pyruvic acid (Ser); by autocatalysis.

This sequence belongs to the phosphatidylserine decarboxylase family. PSD-A subfamily. As to quaternary structure, heterodimer of a large membrane-associated beta subunit and a small pyruvoyl-containing alpha subunit. Pyruvate serves as cofactor. Post-translationally, is synthesized initially as an inactive proenzyme. Formation of the active enzyme involves a self-maturation process in which the active site pyruvoyl group is generated from an internal serine residue via an autocatalytic post-translational modification. Two non-identical subunits are generated from the proenzyme in this reaction, and the pyruvate is formed at the N-terminus of the alpha chain, which is derived from the carboxyl end of the proenzyme. The post-translation cleavage follows an unusual pathway, termed non-hydrolytic serinolysis, in which the side chain hydroxyl group of the serine supplies its oxygen atom to form the C-terminus of the beta chain, while the remainder of the serine residue undergoes an oxidative deamination to produce ammonia and the pyruvoyl prosthetic group on the alpha chain.

It localises to the cell membrane. The enzyme catalyses a 1,2-diacyl-sn-glycero-3-phospho-L-serine + H(+) = a 1,2-diacyl-sn-glycero-3-phosphoethanolamine + CO2. It participates in phospholipid metabolism; phosphatidylethanolamine biosynthesis; phosphatidylethanolamine from CDP-diacylglycerol: step 2/2. Functionally, catalyzes the formation of phosphatidylethanolamine (PtdEtn) from phosphatidylserine (PtdSer). This chain is Phosphatidylserine decarboxylase proenzyme, found in Syntrophus aciditrophicus (strain SB).